The following is a 97-amino-acid chain: Putative septation protein SpoVG (97 aa).

This sequence belongs to the SpoVG family.

Functionally, could be involved in septation. This chain is Putative septation protein SpoVG, found in Borrelia garinii subsp. bavariensis (strain ATCC BAA-2496 / DSM 23469 / PBi) (Borreliella bavariensis).